Reading from the N-terminus, the 286-residue chain is Bifunctional protein FolD (286 aa).

Residues 166–168 (GAS) and I232 contribute to the NADP(+) site.

This sequence belongs to the tetrahydrofolate dehydrogenase/cyclohydrolase family. As to quaternary structure, homodimer.

It catalyses the reaction (6R)-5,10-methylene-5,6,7,8-tetrahydrofolate + NADP(+) = (6R)-5,10-methenyltetrahydrofolate + NADPH. The enzyme catalyses (6R)-5,10-methenyltetrahydrofolate + H2O = (6R)-10-formyltetrahydrofolate + H(+). Its pathway is one-carbon metabolism; tetrahydrofolate interconversion. Its function is as follows. Catalyzes the oxidation of 5,10-methylenetetrahydrofolate to 5,10-methenyltetrahydrofolate and then the hydrolysis of 5,10-methenyltetrahydrofolate to 10-formyltetrahydrofolate. The chain is Bifunctional protein FolD from Marinobacter nauticus (strain ATCC 700491 / DSM 11845 / VT8) (Marinobacter aquaeolei).